The sequence spans 361 residues: Holliday junction branch migration complex subunit RuvB (361 aa).

The tract at residues 1–25 (MSIHTDDFGQGGFAQGGFPPDKAPD) is disordered. A large ATPase domain (RuvB-L) region spans residues 5–207 (TDDFGQGGFA…FGIVARLEFY (203 aa)). ATP-binding positions include Leu-46, Arg-47, Gly-88, Lys-91, Thr-92, Thr-93, 154–156 (EDY), Arg-197, Tyr-207, and Arg-244. Residue Thr-92 coordinates Mg(2+). Residues 208–278 (TAEELARIVR…LADRALAMLD (71 aa)) are small ATPAse domain (RuvB-S). The segment at 281-361 (PQGFDIMDRK…GLPVPGDDAS (81 aa)) is head domain (RuvB-H). The DNA site is built by Arg-336 and Arg-341.

It belongs to the RuvB family. Homohexamer. Forms an RuvA(8)-RuvB(12)-Holliday junction (HJ) complex. HJ DNA is sandwiched between 2 RuvA tetramers; dsDNA enters through RuvA and exits via RuvB. An RuvB hexamer assembles on each DNA strand where it exits the tetramer. Each RuvB hexamer is contacted by two RuvA subunits (via domain III) on 2 adjacent RuvB subunits; this complex drives branch migration. In the full resolvosome a probable DNA-RuvA(4)-RuvB(12)-RuvC(2) complex forms which resolves the HJ.

Its subcellular location is the cytoplasm. It carries out the reaction ATP + H2O = ADP + phosphate + H(+). The RuvA-RuvB-RuvC complex processes Holliday junction (HJ) DNA during genetic recombination and DNA repair, while the RuvA-RuvB complex plays an important role in the rescue of blocked DNA replication forks via replication fork reversal (RFR). RuvA specifically binds to HJ cruciform DNA, conferring on it an open structure. The RuvB hexamer acts as an ATP-dependent pump, pulling dsDNA into and through the RuvAB complex. RuvB forms 2 homohexamers on either side of HJ DNA bound by 1 or 2 RuvA tetramers; 4 subunits per hexamer contact DNA at a time. Coordinated motions by a converter formed by DNA-disengaged RuvB subunits stimulates ATP hydrolysis and nucleotide exchange. Immobilization of the converter enables RuvB to convert the ATP-contained energy into a lever motion, pulling 2 nucleotides of DNA out of the RuvA tetramer per ATP hydrolyzed, thus driving DNA branch migration. The RuvB motors rotate together with the DNA substrate, which together with the progressing nucleotide cycle form the mechanistic basis for DNA recombination by continuous HJ branch migration. Branch migration allows RuvC to scan DNA until it finds its consensus sequence, where it cleaves and resolves cruciform DNA. This chain is Holliday junction branch migration complex subunit RuvB, found in Delftia acidovorans (strain DSM 14801 / SPH-1).